Consider the following 680-residue polypeptide: WD repeat-containing protein 48 homolog (680 aa).

8 WD repeats span residues 26 to 65, 71 to 110, 113 to 152, 164 to 203, 206 to 245, 248 to 287, 290 to 329, and 350 to 389; these read QHRN…SEKY, HHND…CMST, THRD…ALTA, GSKD…RIMK, GHTE…CVQT, VHKE…NKTL, EEQA…RCTL, and KGGA…KKEQ. The disordered stretch occupies residues 592-616; it reads ETTPSGGNANNSLQNSQSDANSEGS.

It belongs to the WD repeat WDR48 family. As to quaternary structure, catalytic component of the Usp12-46 deubiquitylase complex consisting of Usp12-46, Wdr20 and Uaf1; regulatory subunit that, together wtih Wdr20, stabilizes Usp12-46. The Usp12-46 deubiquitylase complex associates with arr/arrow; the interaction leads to deubiquitination and stabilization of arr/arrow.

Its function is as follows. Regulatory component of the Usp12-46 deubiquitylase complex. activates deubiquitination by increasing the catalytic turnover without increasing the affinity of deubiquitinating enzymes for the substrate. The complex deubiquitylates the wg/wingless-signaling receptor arr/arrow, which stabilizes the receptor and increases its concentration at the cell surface; this enhances the sensitivity of cells to wg/wingless-signal stimulation. This increases the amplitude and spatial range of the signaling response to the wg/wingless morphogen gradient, facilitating the precise concentration-dependent regulation of its target genes. Together with Wdr20 and Usp12-46 required for wg/wingless-mediated signaling in the wing imaginal disc and for wg/wingless-dependent regulation of intestinal stem cell proliferation. The protein is WD repeat-containing protein 48 homolog of Drosophila sechellia (Fruit fly).